A 472-amino-acid polypeptide reads, in one-letter code: Siroheme synthase 1 (472 aa).

The tract at residues 1–203 is precorrin-2 dehydrogenase /sirohydrochlorin ferrochelatase; it reads MDYLPLFADL…GQLTEAENEL (203 aa). Residues 22–23 and 43–44 each bind NAD(+); these read EV and QT. At serine 128 the chain carries Phosphoserine. Positions 215 to 472 are uroporphyrinogen-III C-methyltransferase; sequence GEVALVGAGP…AISPSVVNLA (258 aa). Proline 224 provides a ligand contact to S-adenosyl-L-methionine. The Proton acceptor role is filled by aspartate 247. The active-site Proton donor is the lysine 269. Residues 300–302, isoleucine 305, 330–331, methionine 382, and glycine 411 contribute to the S-adenosyl-L-methionine site; these read GGD and TA.

The protein in the N-terminal section; belongs to the precorrin-2 dehydrogenase / sirohydrochlorin ferrochelatase family. It in the C-terminal section; belongs to the precorrin methyltransferase family.

It carries out the reaction uroporphyrinogen III + 2 S-adenosyl-L-methionine = precorrin-2 + 2 S-adenosyl-L-homocysteine + H(+). The enzyme catalyses precorrin-2 + NAD(+) = sirohydrochlorin + NADH + 2 H(+). The catalysed reaction is siroheme + 2 H(+) = sirohydrochlorin + Fe(2+). It participates in cofactor biosynthesis; adenosylcobalamin biosynthesis; precorrin-2 from uroporphyrinogen III: step 1/1. Its pathway is cofactor biosynthesis; adenosylcobalamin biosynthesis; sirohydrochlorin from precorrin-2: step 1/1. It functions in the pathway porphyrin-containing compound metabolism; siroheme biosynthesis; precorrin-2 from uroporphyrinogen III: step 1/1. The protein operates within porphyrin-containing compound metabolism; siroheme biosynthesis; siroheme from sirohydrochlorin: step 1/1. It participates in porphyrin-containing compound metabolism; siroheme biosynthesis; sirohydrochlorin from precorrin-2: step 1/1. In terms of biological role, multifunctional enzyme that catalyzes the SAM-dependent methylations of uroporphyrinogen III at position C-2 and C-7 to form precorrin-2 via precorrin-1. Then it catalyzes the NAD-dependent ring dehydrogenation of precorrin-2 to yield sirohydrochlorin. Finally, it catalyzes the ferrochelation of sirohydrochlorin to yield siroheme. The protein is Siroheme synthase 1 of Yersinia pestis bv. Antiqua (strain Nepal516).